Here is a 408-residue protein sequence, read N- to C-terminus: Peptidase T-like protein RB0614 (408 aa).

Residue His80 coordinates Zn(2+). Residue Asp82 is part of the active site. Asp142 provides a ligand contact to Zn(2+). Glu174 functions as the Proton acceptor in the catalytic mechanism. Zn(2+) is bound by residues Glu175, Asp198, and His380.

Belongs to the peptidase M20B family. It depends on Zn(2+) as a cofactor.

The chain is Peptidase T-like protein RB0614 from Rhizobium meliloti (strain 1021) (Ensifer meliloti).